A 27-amino-acid polypeptide reads, in one-letter code: Conotoxin flf14a (27 aa).

2 disulfide bridges follow: cysteine 6–cysteine 26 and cysteine 10–cysteine 22.

Expressed by the venom duct.

Its subcellular location is the secreted. This is Conotoxin flf14a from Conus anabathrum floridanus (Florida cone).